The chain runs to 401 residues: Formate-dependent phosphoribosylglycinamide formyltransferase (401 aa).

N(1)-(5-phospho-beta-D-ribosyl)glycinamide is bound by residues 22 to 23 (EL) and Glu82. ATP contacts are provided by residues Arg115, Lys157, 162 to 167 (SSGKGQ), 197 to 200 (EGFI), and Glu205. The region spanning 120 to 315 (RLAAESLGLP…EFELHARAIL (196 aa)) is the ATP-grasp domain. Residues Glu274 and Glu286 each coordinate Mg(2+). N(1)-(5-phospho-beta-D-ribosyl)glycinamide-binding positions include Asp293, Lys362, and 369-370 (RR).

The protein belongs to the PurK/PurT family. In terms of assembly, homodimer.

It catalyses the reaction N(1)-(5-phospho-beta-D-ribosyl)glycinamide + formate + ATP = N(2)-formyl-N(1)-(5-phospho-beta-D-ribosyl)glycinamide + ADP + phosphate + H(+). It participates in purine metabolism; IMP biosynthesis via de novo pathway; N(2)-formyl-N(1)-(5-phospho-D-ribosyl)glycinamide from N(1)-(5-phospho-D-ribosyl)glycinamide (formate route): step 1/1. Functionally, involved in the de novo purine biosynthesis. Catalyzes the transfer of formate to 5-phospho-ribosyl-glycinamide (GAR), producing 5-phospho-ribosyl-N-formylglycinamide (FGAR). Formate is provided by PurU via hydrolysis of 10-formyl-tetrahydrofolate. This Cupriavidus taiwanensis (strain DSM 17343 / BCRC 17206 / CCUG 44338 / CIP 107171 / LMG 19424 / R1) (Ralstonia taiwanensis (strain LMG 19424)) protein is Formate-dependent phosphoribosylglycinamide formyltransferase.